A 335-amino-acid polypeptide reads, in one-letter code: MNFKKLPKIELHCHLDGSLRVDTILDIAKKDNIPLPSYNKKELINYVSIMDDCNSLDEYLNKFFIPNKVMQTKENLKRIAFELLEDVAADNVKYIEVRFAPLLHVEKGLNIEEIIESVLEGIKEAEKLYDIKGNLILGCMRNMDIPSAFEVVKKGSKFIGKGVVAIDLCAGEEPHFPGKYIEVLKLAKECGYRITIHAGEAGVGENVLEAITLLNAERIGHGIYIKNCAEAYKLVKEKNIPLEVCPTSNLHTKAFESYETHPFMDFLKDGIKVTINTDNMTVSNTTITKELEMLNKFCGLSIEDYKILYLNAVEASFASPETKEILKSYANEITA.

Zn(2+)-binding residues include histidine 12 and histidine 14. Residues histidine 14 and aspartate 16 each coordinate substrate. Residue histidine 197 participates in Zn(2+) binding. The active-site Proton donor is glutamate 200. Aspartate 278 is a binding site for Zn(2+).

Belongs to the metallo-dependent hydrolases superfamily. Adenosine and AMP deaminases family. Adenosine deaminase subfamily. Requires Zn(2+) as cofactor.

It carries out the reaction adenosine + H2O + H(+) = inosine + NH4(+). The catalysed reaction is 2'-deoxyadenosine + H2O + H(+) = 2'-deoxyinosine + NH4(+). Functionally, catalyzes the hydrolytic deamination of adenosine and 2-deoxyadenosine. The protein is Adenosine deaminase of Clostridium botulinum (strain Kyoto / Type A2).